A 64-amino-acid chain; its full sequence is DNA gyrase inhibitor YacG (64 aa).

The Zn(2+) site is built by C9, C12, C28, and C32. The disordered stretch occupies residues 45 to 64 (KRIPSSGDLSESDDWSEEPK). Residues 54-64 (SESDDWSEEPK) show a composition bias toward acidic residues.

It belongs to the DNA gyrase inhibitor YacG family. As to quaternary structure, interacts with GyrB. The cofactor is Zn(2+).

In terms of biological role, inhibits all the catalytic activities of DNA gyrase by preventing its interaction with DNA. Acts by binding directly to the C-terminal domain of GyrB, which probably disrupts DNA binding by the gyrase. The polypeptide is DNA gyrase inhibitor YacG (Escherichia fergusonii (strain ATCC 35469 / DSM 13698 / CCUG 18766 / IAM 14443 / JCM 21226 / LMG 7866 / NBRC 102419 / NCTC 12128 / CDC 0568-73)).